Consider the following 453-residue polypeptide: Glutamyl-tRNA(Gln) amidotransferase subunit A (453 aa).

Active-site charge relay system residues include Lys-56 and Ser-131. Ser-155 serves as the catalytic Acyl-ester intermediate.

This sequence belongs to the amidase family. GatA subfamily. As to quaternary structure, heterotrimer of A, B and C subunits.

The enzyme catalyses L-glutamyl-tRNA(Gln) + L-glutamine + ATP + H2O = L-glutaminyl-tRNA(Gln) + L-glutamate + ADP + phosphate + H(+). In terms of biological role, allows the formation of correctly charged Gln-tRNA(Gln) through the transamidation of misacylated Glu-tRNA(Gln) in organisms which lack glutaminyl-tRNA synthetase. The reaction takes place in the presence of glutamine and ATP through an activated gamma-phospho-Glu-tRNA(Gln). This chain is Glutamyl-tRNA(Gln) amidotransferase subunit A, found in Campylobacter jejuni subsp. doylei (strain ATCC BAA-1458 / RM4099 / 269.97).